The chain runs to 348 residues: N-formyl peptide receptor 2 (348 aa).

The N-linked (GlcNAc...) asparagine glycan is linked to Asn-1. Over 1 to 24 (NFSTPLNEYEEGSYESAGYTVLRI) the chain is Extracellular. The helical transmembrane segment at 25-47 (LPLVVLGVTFVLGVLGNGLVIWV) threads the bilayer. The Cytoplasmic portion of the chain corresponds to 48–58 (AGFRMTRTVTT). The helical transmembrane segment at 59–80 (ICYLNLALADFSFTATLPFLIV) threads the bilayer. Over 81-97 (SMAMGEKWPFGWFLCKL) the chain is Extracellular. Cysteines 95 and 173 form a disulfide. Residues 98–118 (IHIVVDINLFGSVFLIGFIAL) form a helical membrane-spanning segment. Residues 119 to 137 (DRCICVLHPVWAQNHRTVS) lie on the Cytoplasmic side of the membrane. Residues 138–159 (LAMKVIVGPWILALVLTLPVFL) traverse the membrane as a helical segment. Residues 160-202 (FLTTVTIPNGDTYCTFNFASWGGTPEERLKVAITLLTARGIIR) lie on the Extracellular side of the membrane. Residues 203–223 (FVIGFSLPMSIVAICYGLIAA) form a helical membrane-spanning segment. The Cytoplasmic portion of the chain corresponds to 224 to 239 (KIHKKGMIKSSRPLRV). The chain crosses the membrane as a helical span at residues 240–263 (LTAVVASFFICWFPFQLVALLGTV). The Extracellular portion of the chain corresponds to 264–283 (WLKEMLFYGKYKIIDILVNP). A helical membrane pass occupies residues 284–303 (TSSLAFFNCCLNPMLYVFVG). The Cytoplasmic segment spans residues 304 to 348 (QDFRERLIHSLPTSLERALSEDSAPTNDTAANCASPPAETELQAM). The segment at 322-348 (LSEDSAPTNDTAANCASPPAETELQAM) is disordered. Residues 326–335 (SAPTNDTAAN) show a composition bias toward polar residues.

It belongs to the G-protein coupled receptor 1 family. In terms of assembly, interacts with Amyloid-beta protein 42, product of APP; the interaction takes place at the cell surface and the complex is then rapidly internalized.

It localises to the cell membrane. Low affinity receptor for N-formyl-methionyl peptides, which are powerful neutrophil chemotactic factors. Binding of FMLP to the receptor causes activation of neutrophils. This response is mediated via a G-protein that activates a phosphatidylinositol-calcium second messenger system. Receptor for the chemokine-like protein FAM19A5, mediating FAM19A5-stimulated macrophage chemotaxis and the inhibitory effect on TNFSF11/RANKL-induced osteoclast differentiation. The protein is N-formyl peptide receptor 2 (FPR2) of Pan troglodytes (Chimpanzee).